We begin with the raw amino-acid sequence, 288 residues long: MWKHVSQVLADQFGAYYSIKHKEKIHTGEMHEAWIIDDGIQPVFLKVNDKTFRSMFRAEADQLLLLAKTNTINVPNVYTVGCSHTHSFLLLEALPLDKTNPVDAMGKFGEQLAKLHLIKGADNYGLDFDTWLGPEYQPNGWKENWATFFSEQRIGWQLQICREKNLVFGDIEVLVKKVAELLAKHKPQPALLHGNLWIENCATVKQEIFTYDPACYWGDRECDLAFSELFEPFPRQFYESYDRTYPIDEGYPERKAIYQLYYLLNFSHRFNKHYVELTKKFIHDILSR.

92-94 serves as a coordination point for ATP; the sequence is EAL.

Belongs to the fructosamine kinase family.

Functionally, ketoamine kinase that phosphorylates ketoamines on the third carbon of the sugar moiety to generate ketoamine 3-phosphate. The sequence is that of Probable ketoamine kinase PM0587 from Pasteurella multocida (strain Pm70).